The sequence spans 74 residues: Protein kish-B (74 aa).

A signal peptide spans 1 to 22 (MTNVYSFDGILVFGLLFICTCA). Topologically, residues 23 to 52 (YLKKVPRLNSWLLSEKKGVWGVFYKAAVIG) are extracellular. A helical membrane pass occupies residues 53-73 (TRLHVVVAASCLCMAFYLIFL). Residue lysine 74 is a topological domain, cytoplasmic.

The protein belongs to the KISH family.

The protein localises to the golgi apparatus membrane. Involved in the early part of the secretory pathway. In Danio rerio (Zebrafish), this protein is Protein kish-B (tmem167b).